Reading from the N-terminus, the 216-residue chain is Adenylate kinase (216 aa).

An ATP-binding site is contributed by 13 to 18 (GAGKGT). The tract at residues 33-66 (TTGDALRANKTKDITHLDVEYDTPGAYMDAGELV) is NMP. AMP-binding positions include T34, R39, 64 to 66 (ELV), 89 to 92 (GYPR), and Q96. The tract at residues 125–162 (GRRVCEDCGATFHVSFNQPETEGVCDACGGSLYQREDD) is LID. R126 is an ATP binding site. Zn(2+) contacts are provided by C129 and C132. 135 to 136 (TF) provides a ligand contact to ATP. The Zn(2+) site is built by C149 and C152. AMP-binding residues include R159 and R170. Residue R198 coordinates ATP.

It belongs to the adenylate kinase family. Monomer.

The protein resides in the cytoplasm. It carries out the reaction AMP + ATP = 2 ADP. It participates in purine metabolism; AMP biosynthesis via salvage pathway; AMP from ADP: step 1/1. Its function is as follows. Catalyzes the reversible transfer of the terminal phosphate group between ATP and AMP. Plays an important role in cellular energy homeostasis and in adenine nucleotide metabolism. The polypeptide is Adenylate kinase (Halobacterium salinarum (strain ATCC 700922 / JCM 11081 / NRC-1) (Halobacterium halobium)).